Reading from the N-terminus, the 304-residue chain is Mitochondrial RNA-splicing protein MRS4 (304 aa).

Solcar repeat units lie at residues 21 to 108 (APLH…CKAR), 118 to 200 (HQPM…ASKF), and 207 to 300 (YNPL…AKHF). 6 helical membrane-spanning segments follow: residues 23–41 (LHSQLLAGAFAGIMEHSLM), 83–102 (GVQSVILGAGPAHAVYFGTY), 120–139 (PMKTALSGTIATIAADALMN), 175–194 (SYPTTLAMNIPFAAFNFMIY), 209–228 (PLIHCLCGGISGATCAALTT), and 275–288 (GLKPRIVANIPATA).

It belongs to the mitochondrial carrier (TC 2.A.29) family.

The protein resides in the mitochondrion inner membrane. Functionally, MRS4 suppresses a mitochondrial splice defect in the first intron of the COB gene. It may act as a carrier, exerting its suppressor activity via modulation of solute concentrations in the mitochondrion (possibly of cations). Not essential. This is Mitochondrial RNA-splicing protein MRS4 (MRS4) from Saccharomyces cerevisiae (strain ATCC 204508 / S288c) (Baker's yeast).